Here is a 418-residue protein sequence, read N- to C-terminus: Methionine aminopeptidase 2 (418 aa).

The segment at 18-49 (VSEPAAVDDSEVTEDATVQDKKKKKKKKKKKG) is disordered. The span at 38–49 (KKKKKKKKKKKG) shows a compositional bias: basic residues. His172 serves as a coordination point for substrate. Residues Asp192, Asp203, and His272 each contribute to the a divalent metal cation site. Substrate is bound at residue His280. Positions 305 and 399 each coordinate a divalent metal cation.

It belongs to the peptidase M24A family. Methionine aminopeptidase eukaryotic type 2 subfamily. It depends on Co(2+) as a cofactor. Zn(2+) serves as cofactor. Mn(2+) is required as a cofactor. The cofactor is Fe(2+).

The protein resides in the cytoplasm. The enzyme catalyses Release of N-terminal amino acids, preferentially methionine, from peptides and arylamides.. Cotranslationally removes the N-terminal methionine from nascent proteins. The N-terminal methionine is often cleaved when the second residue in the primary sequence is small and uncharged (Met-Ala-, Cys, Gly, Pro, Ser, Thr, or Val). In Kluyveromyces lactis (strain ATCC 8585 / CBS 2359 / DSM 70799 / NBRC 1267 / NRRL Y-1140 / WM37) (Yeast), this protein is Methionine aminopeptidase 2.